Here is a 1036-residue protein sequence, read N- to C-terminus: Ephrin type-A receptor 6 (1036 aa).

A signal peptide spans 1 to 22 (MGGCEVREFLLQFGFFLPLLTA). At 23-550 (WPGDCSHVSN…MAAEQGQILV (528 aa)) the chain is on the extracellular side. Residues 34–212 (QVVLLDTTTV…FYKKCPFTVR (179 aa)) form the Eph LBD domain. 2 consecutive Fibronectin type-III domains span residues 331–441 (PPSA…TDQD) and 442–537 (APSL…TGDE). N-linked (GlcNAc...) asparagine glycans are attached at residues Asn343, Asn397, and Asn410. The helical transmembrane segment at 551-571 (IATAAVGGFTLLVILTLFFLI) threads the bilayer. Over 572 to 1036 (TGRCQWYIKA…MHIQEKGFHV (465 aa)) the chain is Cytoplasmic. Residues Tyr606 and Tyr612 each carry the phosphotyrosine; by autocatalysis modification. The Protein kinase domain maps to 631–944 (IRIERVIGAG…RNPSALHTLV (314 aa)). Residues 637–645 (IGAGEFGEV) and Lys663 contribute to the ATP site. The active-site Proton acceptor is the Asp798. Phosphotyrosine; by autocatalysis is present on residues Tyr831 and Tyr978. The SAM domain occupies 961–1025 (PLFVTVGDWL…VSSIQTLRLH (65 aa)). The short motif at 1034-1036 (FHV) is the PDZ-binding element.

Belongs to the protein kinase superfamily. Tyr protein kinase family. Ephrin receptor subfamily. Heterotetramer upon binding of the ligand. The heterotetramer is composed of an ephrin dimer and a receptor dimer. Oligomerization is probably required to induce biological responses. Interacts (via SAM domain) with ANKS1A (via SAM domain). Expressed in brain and testis.

The protein localises to the membrane. It catalyses the reaction L-tyrosyl-[protein] + ATP = O-phospho-L-tyrosyl-[protein] + ADP + H(+). In terms of biological role, receptor tyrosine kinase which binds promiscuously GPI-anchored ephrin-A family ligands residing on adjacent cells, leading to contact-dependent bidirectional signaling into neighboring cells. The signaling pathway downstream of the receptor is referred to as forward signaling while the signaling pathway downstream of the ephrin ligand is referred to as reverse signaling. This chain is Ephrin type-A receptor 6 (EPHA6), found in Homo sapiens (Human).